A 318-amino-acid chain; its full sequence is NADH-ubiquinone oxidoreductase chain 1 (318 aa).

The next 8 helical transmembrane spans lie at 2-22 (FLIN…FLTL), 69-89 (LLFI…WLPI), 102-122 (ILFI…SGWA), 146-166 (LAII…SSLI), 171-191 (YMWI…STLA), 222-242 (LFFL…AILF), 253-273 (EMFT…FLWI), and 294-314 (LPLT…LSSI).

This sequence belongs to the complex I subunit 1 family. In terms of assembly, core subunit of respiratory chain NADH dehydrogenase (Complex I) which is composed of 45 different subunits.

It localises to the mitochondrion inner membrane. It catalyses the reaction a ubiquinone + NADH + 5 H(+)(in) = a ubiquinol + NAD(+) + 4 H(+)(out). Core subunit of the mitochondrial membrane respiratory chain NADH dehydrogenase (Complex I) which catalyzes electron transfer from NADH through the respiratory chain, using ubiquinone as an electron acceptor. Essential for the catalytic activity and assembly of complex I. This is NADH-ubiquinone oxidoreductase chain 1 (MT-ND1) from Oryctolagus cuniculus (Rabbit).